The chain runs to 784 residues: Transcriptional activator somA (784 aa).

The LisH domain occupies methionine 43–leucine 75. A compositionally biased stretch (polar residues) spans leucine 75–serine 84. 4 disordered regions span residues leucine 75 to alanine 122, glycine 212 to leucine 295, methionine 424 to isoleucine 726, and glycine 764 to leucine 784. The span at aspartate 103 to proline 117 shows a compositional bias: basic and acidic residues. Residues glutamine 215–methionine 233 show a composition bias toward low complexity. The span at glutamine 234–glycine 244 shows a compositional bias: basic and acidic residues. Residues proline 247–proline 259 are compositionally biased toward low complexity. Residues serine 453–glutamate 467 show a composition bias toward polar residues. The span at glutamine 564–serine 592 shows a compositional bias: low complexity. Polar residues predominate over residues arginine 607 to asparagine 624. Positions lysine 629–arginine 638 are enriched in basic and acidic residues. Low complexity-rich tracts occupy residues lysine 644 to serine 661 and proline 691 to serine 701. Pro residues predominate over residues alanine 702–aspartate 715.

The protein belongs to the FLO8 family. As to quaternary structure, interacts with ptaB.

It is found in the nucleus. In terms of biological role, transcription factor that controls the expression of genes related to the process of conidiation and adherence and regulates biofilm formation. Controls conidiation and adhesion primarily by affecting the expression of the three regulatory genes flbB, stuA and medA. Required for virulence in an egg and a mouse infection model. This chain is Transcriptional activator somA, found in Aspergillus fumigatus (strain ATCC MYA-4609 / CBS 101355 / FGSC A1100 / Af293) (Neosartorya fumigata).